A 470-amino-acid polypeptide reads, in one-letter code: Putative multidrug resistance protein MdtD (470 aa).

The Periplasmic portion of the chain corresponds to 1–11 (MTELPDNTRWQ). A helical transmembrane segment spans residues 12 to 32 (LWIVAFGFFMQSLDTTIVNTA). Over 33–48 (LPSMAKSLGESPLHMH) the chain is Cytoplasmic. A helical membrane pass occupies residues 49–69 (MVVVSYVLTVAVMLPASGWLA). The Periplasmic segment spans residues 70-76 (DKIGVRN). The chain crosses the membrane as a helical span at residues 77–97 (IFFAAIVLFTLGSLFCALSGT). At 98–101 (LNQL) the chain is on the cytoplasmic side. Residues 102–124 (VLARVLQGVGGAMMVPVGRLTVM) traverse the membrane as a helical segment. The Periplasmic portion of the chain corresponds to 125-137 (KIVPRAQYMAAMT). Residues 138–158 (FVTLPGQIGPLLGPALGGVLV) form a helical membrane-spanning segment. Residues 159 to 164 (EYASWH) lie on the Cytoplasmic side of the membrane. Residues 165–185 (WIFLINIPVGIVGAMATFMLM) traverse the membrane as a helical segment. Residues 186–196 (PNYTIETRRFD) are Periplasmic-facing. Residues 197-217 (LPGFLLLAIGMAVLTLALDGS) traverse the membrane as a helical segment. The Cytoplasmic segment spans residues 218–224 (KSMGISP). A helical membrane pass occupies residues 225 to 245 (WTLAGLAAGGAAAILLYLFHA). Residues 246-262 (KKSSGALFSLRLFRTPT) lie on the Periplasmic side of the membrane. A helical transmembrane segment spans residues 263-283 (FSLGLLGSFAGRIGSGMLPFM). The Cytoplasmic portion of the chain corresponds to 284 to 285 (TP). A helical transmembrane segment spans residues 286 to 306 (VFLQIGLGFSPFHAGLMMIPM). The Periplasmic segment spans residues 307 to 341 (VLGSMGMKRIVVQIVNRFGYRRVLVATTLGLALVS). Residues 342-362 (LLFMSVALLGWYYLLPLVLLL) traverse the membrane as a helical segment. The Cytoplasmic segment spans residues 363–395 (QGMVNSARFSSMNTLTLKDLPDTLASSGNSLLS). A helical transmembrane segment spans residues 396 to 416 (MIMQLSMSIGVTIAGMLLGMF). The Periplasmic portion of the chain corresponds to 417–430 (GQQHIGIDSSATHH). A helical membrane pass occupies residues 431-451 (VFMYTWLCMAVIIALPAIIFA). The Cytoplasmic portion of the chain corresponds to 452 to 470 (RVPNDTQQNMVISRRKRSL).

The protein belongs to the major facilitator superfamily. TCR/Tet family.

It localises to the cell inner membrane. This Salmonella paratyphi A (strain ATCC 9150 / SARB42) protein is Putative multidrug resistance protein MdtD.